A 233-amino-acid polypeptide reads, in one-letter code: Auxin-responsive protein IAA11 (233 aa).

Disordered regions lie at residues 1 to 27 (MAGL…RSSG) and 46 to 100 (PAAV…PKAQ). The EAR-like (transcriptional repression) motif lies at 11–15 (LRLGL). Residues 54–63 (GAQEDKEDAD) are compositionally biased toward acidic residues. Positions 122-217 (AALVKVSMDG…SCKRLRIMKG (96 aa)) constitute a PB1 domain.

This sequence belongs to the Aux/IAA family. As to quaternary structure, homodimers and heterodimers. As to expression, highly expressed in etiolated shoots. Expressed in roots.

It localises to the nucleus. Aux/IAA proteins are short-lived transcriptional factors that function as repressors of early auxin response genes at low auxin concentrations. The polypeptide is Auxin-responsive protein IAA11 (IAA11) (Oryza sativa subsp. japonica (Rice)).